The chain runs to 507 residues: DNA ligase B (507 aa).

The not required for adenylyltransferase activity, required for nick joining stretch occupies residues 1–172; the sequence is MLLHDVAITS…AAAAGLSGAA (172 aa). Residue Glu209 coordinates ATP. Lys211 serves as the catalytic N6-AMP-lysine intermediate. ATP-binding residues include Arg216, Arg231, Glu260, Phe300, Arg372, and Lys378.

It belongs to the ATP-dependent DNA ligase family. Monomer. The cofactor is Mg(2+).

The catalysed reaction is ATP + (deoxyribonucleotide)n-3'-hydroxyl + 5'-phospho-(deoxyribonucleotide)m = (deoxyribonucleotide)n+m + AMP + diphosphate.. DNA ligase that seals nicks in double-stranded DNA during DNA replication, DNA recombination and DNA repair. The chain is DNA ligase B (ligB) from Mycobacterium tuberculosis (strain ATCC 25618 / H37Rv).